Consider the following 130-residue polypeptide: S-adenosylmethionine decarboxylase proenzyme (130 aa).

Ser63 functions as the Schiff-base intermediate with substrate; via pyruvic acid in the catalytic mechanism. Position 63 is a pyruvic acid (Ser); by autocatalysis (Ser63). Catalysis depends on His68, which acts as the Proton acceptor; for processing activity. The Proton donor; for catalytic activity role is filled by Cys83.

It belongs to the prokaryotic AdoMetDC family. Type 1 subfamily. In terms of assembly, heterotetramer of two alpha and two beta chains arranged as a dimer of alpha/beta heterodimers. The cofactor is pyruvate. Is synthesized initially as an inactive proenzyme. Formation of the active enzyme involves a self-maturation process in which the active site pyruvoyl group is generated from an internal serine residue via an autocatalytic post-translational modification. Two non-identical subunits are generated from the proenzyme in this reaction, and the pyruvate is formed at the N-terminus of the alpha chain, which is derived from the carboxyl end of the proenzyme. The post-translation cleavage follows an unusual pathway, termed non-hydrolytic serinolysis, in which the side chain hydroxyl group of the serine supplies its oxygen atom to form the C-terminus of the beta chain, while the remainder of the serine residue undergoes an oxidative deamination to produce ammonia and the pyruvoyl group blocking the N-terminus of the alpha chain.

It catalyses the reaction S-adenosyl-L-methionine + H(+) = S-adenosyl 3-(methylsulfanyl)propylamine + CO2. The protein operates within amine and polyamine biosynthesis; S-adenosylmethioninamine biosynthesis; S-adenosylmethioninamine from S-adenosyl-L-methionine: step 1/1. Its function is as follows. Catalyzes the decarboxylation of S-adenosylmethionine to S-adenosylmethioninamine (dcAdoMet), the propylamine donor required for the synthesis of the polyamines spermine and spermidine from the diamine putrescine. This chain is S-adenosylmethionine decarboxylase proenzyme (speH), found in Thermotoga maritima (strain ATCC 43589 / DSM 3109 / JCM 10099 / NBRC 100826 / MSB8).